The primary structure comprises 172 residues: NADH-quinone oxidoreductase subunit B (172 aa).

[4Fe-4S] cluster is bound by residues Cys-46, Cys-47, Cys-111, and Cys-141.

It belongs to the complex I 20 kDa subunit family. As to quaternary structure, NDH-1 is composed of 14 different subunits. Subunits NuoB, C, D, E, F, and G constitute the peripheral sector of the complex. [4Fe-4S] cluster is required as a cofactor.

The protein resides in the cell membrane. It carries out the reaction a quinone + NADH + 5 H(+)(in) = a quinol + NAD(+) + 4 H(+)(out). Functionally, NDH-1 shuttles electrons from NADH, via FMN and iron-sulfur (Fe-S) centers, to quinones in the respiratory chain. The immediate electron acceptor for the enzyme in this species is believed to be a menaquinone. Couples the redox reaction to proton translocation (for every two electrons transferred, four hydrogen ions are translocated across the cytoplasmic membrane), and thus conserves the redox energy in a proton gradient. This is NADH-quinone oxidoreductase subunit B from Bacillus cereus (strain G9842).